The primary structure comprises 262 residues: Putative hydro-lyase Cbei_2760 (262 aa).

It belongs to the D-glutamate cyclase family.

The protein is Putative hydro-lyase Cbei_2760 of Clostridium beijerinckii (strain ATCC 51743 / NCIMB 8052) (Clostridium acetobutylicum).